Reading from the N-terminus, the 362-residue chain is Phosphoserine aminotransferase (362 aa).

Residues S9 and R42 each contribute to the L-glutamate site. Pyridoxal 5'-phosphate-binding positions include 76–77 (GR), W102, T153, D174, and Q197. K198 is subject to N6-(pyridoxal phosphate)lysine. Position 239-240 (239-240 (NT)) interacts with pyridoxal 5'-phosphate.

This sequence belongs to the class-V pyridoxal-phosphate-dependent aminotransferase family. SerC subfamily. As to quaternary structure, homodimer. Requires pyridoxal 5'-phosphate as cofactor.

The protein localises to the cytoplasm. It carries out the reaction O-phospho-L-serine + 2-oxoglutarate = 3-phosphooxypyruvate + L-glutamate. The catalysed reaction is 4-(phosphooxy)-L-threonine + 2-oxoglutarate = (R)-3-hydroxy-2-oxo-4-phosphooxybutanoate + L-glutamate. The protein operates within amino-acid biosynthesis; L-serine biosynthesis; L-serine from 3-phospho-D-glycerate: step 2/3. Its pathway is cofactor biosynthesis; pyridoxine 5'-phosphate biosynthesis; pyridoxine 5'-phosphate from D-erythrose 4-phosphate: step 3/5. Its function is as follows. Catalyzes the reversible conversion of 3-phosphohydroxypyruvate to phosphoserine and of 3-hydroxy-2-oxo-4-phosphonooxybutanoate to phosphohydroxythreonine. In Salmonella arizonae (strain ATCC BAA-731 / CDC346-86 / RSK2980), this protein is Phosphoserine aminotransferase.